The sequence spans 122 residues: Large ribosomal subunit protein uL14 (122 aa).

It belongs to the universal ribosomal protein uL14 family. Part of the 50S ribosomal subunit. Forms a cluster with proteins L3 and L19. In the 70S ribosome, L14 and L19 interact and together make contacts with the 16S rRNA in bridges B5 and B8.

Binds to 23S rRNA. Forms part of two intersubunit bridges in the 70S ribosome. This chain is Large ribosomal subunit protein uL14, found in Shewanella baltica (strain OS223).